The sequence spans 353 residues: Fe(3+) ions import ATP-binding protein FbpC (353 aa).

An ABC transporter domain is found at V9–M239. G41 to T48 serves as a coordination point for ATP.

This sequence belongs to the ABC transporter superfamily. Fe(3+) ion importer (TC 3.A.1.10) family. The complex is composed of two ATP-binding proteins (FbpC), two transmembrane proteins (FbpB) and a solute-binding protein (FbpA).

The protein localises to the cell inner membrane. It catalyses the reaction Fe(3+)(out) + ATP + H2O = Fe(3+)(in) + ADP + phosphate + H(+). Part of the ABC transporter complex FbpABC involved in Fe(3+) ions import. Responsible for energy coupling to the transport system. The sequence is that of Fe(3+) ions import ATP-binding protein FbpC from Brucella suis biovar 1 (strain 1330).